Reading from the N-terminus, the 273-residue chain is HUWE1-associated protein modifying stress responses 2 (273 aa).

Disordered regions lie at residues 146-181 (GKVP…SSSV), 204-230 (ISMR…FLED), and 251-273 (KRTS…NRMV). The segment covering 149 to 165 (PPAPPPPRTPRTPPKPP) has biased composition (pro residues). Polar residues-rich tracts occupy residues 170-181 (SQAVATESSSSV), 208-218 (SGDSPQDSGVA), and 254-267 (SAQC…SPIQ). The tract at residues 249–273 (IRKRTSAQCSDGITDSPIQKRNRMV) is nuclear localization signal.

It belongs to the HAPSTR1 family. As to quaternary structure, homooligomer. Heterooligomer with HAPSTR1; the interaction is direct and stabilizes HAPSTR1 independently of HUWE1. Interacts with HUWE1. As to expression, expressed in a tissue-restricted manner compared to HAPSTR1.

The protein localises to the nucleus. In terms of biological role, together with HAPSTR1 plays a central regulatory role in the cellular response to molecular stressors, such as DNA damage, nutrient scarcity, and protein misfolding. Regulates these multiple stress response signaling pathways by stabilizing HAPSTR1, but also independently of HAPSTR1. In Homo sapiens (Human), this protein is HUWE1-associated protein modifying stress responses 2.